The following is a 177-amino-acid chain: ADP-ribose 1''-phosphate phosphatase (177 aa).

Residues 1-177 (MSNITYVKGN…GDMSFTVYQL (177 aa)) form the Macro domain. Substrate contacts are provided by residues 9 to 11 (GNI), 24 to 26 (SCN), 31 to 36 (WGGGIA), and 147 to 153 (INSGIFG).

It belongs to the POA1 family.

The catalysed reaction is ADP-alpha-D-ribose 1''-phosphate + H2O = ADP-D-ribose + phosphate. Functionally, highly specific phosphatase involved in the metabolism of ADP-ribose 1''-phosphate (Appr1p) which is produced as a consequence of tRNA splicing. Removes ADP-ribose from glutamate residues in proteins bearing a single ADP-ribose moiety. Inactive towards proteins bearing poly-ADP-ribose. The protein is ADP-ribose 1''-phosphate phosphatase (POA1) of Saccharomyces cerevisiae (strain YJM789) (Baker's yeast).